The following is a 196-amino-acid chain: MLERIKVCFTESIQTQIAAAEALPDAISRAALTVVQSLLNGNKILSCGNGTSSANAQHFAASMINRFETERPSLPAIALSADNVLLTAIGNDRLHEEIYAKQVRALGHTGDILLAISTRGNSRDIVKAVEAAVTRDMTIVALTGHDGGELAGLLGPQDVEIRIPSHRSARIQEMHMLTVNCLCDLIDNTLFPHQEV.

An SIS domain is found at 34 to 196 (VVQSLLNGNK…DNTLFPHQEV (163 aa)).

This sequence belongs to the SIS family. DiaA subfamily. As to quaternary structure, homotetramer; dimer of dimers.

Its function is as follows. Required for the timely initiation of chromosomal replication via direct interactions with the DnaA initiator protein. The sequence is that of DnaA initiator-associating protein DiaA from Erwinia tasmaniensis (strain DSM 17950 / CFBP 7177 / CIP 109463 / NCPPB 4357 / Et1/99).